A 452-amino-acid chain; its full sequence is Lysine-rich nucleolar protein 1 (452 aa).

Disordered regions lie at residues 1 to 28 (MITK…VKEP), 55 to 161 (VIQE…AFSG), and 184 to 305 (REQA…PDTD). A Glycyl lysine isopeptide (Lys-Gly) (interchain with G-Cter in SUMO2) cross-link involves residue Lys-7. The span at 65–75 (LVKKKKKKKGH) shows a compositional bias: basic residues. The span at 78 to 98 (ICEEHLEPEITLRAGRTERSH) shows a compositional bias: basic and acidic residues. Residue Ser-112 is modified to Phosphoserine. Lys-126 participates in a covalent cross-link: Glycyl lysine isopeptide (Lys-Gly) (interchain with G-Cter in SUMO2). A compositionally biased stretch (basic and acidic residues) spans 127–139 (TSPDPRQDEEVTR). Ser-128 carries the phosphoserine modification. 2 stretches are compositionally biased toward basic residues: residues 140–151 (VGKKLKKHKKEK) and 258–267 (SVKKKVKSKK). Phosphoserine is present on Ser-258. Residue Lys-280 forms a Glycyl lysine isopeptide (Lys-Gly) (interchain with G-Cter in SUMO2) linkage. Positions 293-305 (VAEEPWEEEPDTD) are enriched in acidic residues. The interval 300–452 (EEPDTDLEVV…NASKSIKFED (153 aa)) is interaction with ZNF106. Thr-304 is subject to Phosphothreonine. Residues Lys-313, Lys-347, Lys-367, Lys-369, and Lys-401 each participate in a glycyl lysine isopeptide (Lys-Gly) (interchain with G-Cter in SUMO2) cross-link. The residue at position 424 (Arg-424) is an Omega-N-methylarginine. Residue Lys-436 forms a Glycyl lysine isopeptide (Lys-Gly) (interchain with G-Cter in SUMO2) linkage.

As to quaternary structure, interacts with ZNF106.

Its subcellular location is the nucleus. The protein localises to the nucleolus. The polypeptide is Lysine-rich nucleolar protein 1 (KNOP1) (Bos taurus (Bovine)).